Reading from the N-terminus, the 456-residue chain is tRNA modification GTPase MnmE (456 aa).

Positions 24, 81, and 120 each coordinate (6S)-5-formyl-5,6,7,8-tetrahydrofolate. Residues 216 to 379 (GMTVVIAGRP…LRDHLKACMG (164 aa)) enclose the TrmE-type G domain. N226 contributes to the K(+) binding site. Residues 226-231 (NAGKSS), 245-251 (TDIAGTT), 270-273 (DTAG), and 335-338 (NKAD) contribute to the GTP site. Position 230 (S230) interacts with Mg(2+). K(+) is bound by residues T245, I247, and T250. Mg(2+) is bound at residue T251. Residue K456 coordinates (6S)-5-formyl-5,6,7,8-tetrahydrofolate.

This sequence belongs to the TRAFAC class TrmE-Era-EngA-EngB-Septin-like GTPase superfamily. TrmE GTPase family. In terms of assembly, homodimer. Heterotetramer of two MnmE and two MnmG subunits. It depends on K(+) as a cofactor.

It localises to the cytoplasm. In terms of biological role, exhibits a very high intrinsic GTPase hydrolysis rate. Involved in the addition of a carboxymethylaminomethyl (cmnm) group at the wobble position (U34) of certain tRNAs, forming tRNA-cmnm(5)s(2)U34. The sequence is that of tRNA modification GTPase MnmE from Pseudomonas putida (strain GB-1).